A 550-amino-acid chain; its full sequence is MNGSADAGPRPRKYVFITGGVVSSLGKGILTSSLGALLRARGYRVTAIKIDPYVNVDAGTMRPYEHGEVFVTADGAETDLDIGHYERFLDMDLSRGNNLTTGQVYLSVIQKERRGEYLSQTVQVIPHITDEIKERIRKVAEEQKAEIVVVEVGGTVGDIESLPFLEAIRQFRFDEGEGNTLYLHLTLVPYLETSEEFKTKPTQHSVATLRGVGIQPDILVLRSARPVPEEVRRKVALFTNVRPGHVFSSPTVEHLYEVPLLLEEQGLGRAVERALGLEAVIPNLSFWQEAVRVLKHPERTVKIAIAGKYVKMPDAYLSLLEALRHAGIKNRARVEVKWVDAESLEAADLDEAFRDVSGILVPGGFGVRGIEGKVRAAQYARERKIPYLGICLGLQIAVIEFARNVAGLKGANSTEFDPHTPHPVIDLMPEQLEVEGLGGTMRLGDWPMRIKPGTLLHRLYGKEEVLERHRHRYEVNPLYVDGLERAGLVVSATTPGMRGRGAGLVEAIELKDHPFFLGLQSHPEFKSRPMRPSPPFVGFVEAALAYQERA.

The segment at 1–277 (MNGSADAGPR…GRAVERALGL (277 aa)) is amidoligase domain. Ser-23 provides a ligand contact to CTP. Ser-23 is a binding site for UTP. 24-29 (SLGKGI) lines the ATP pocket. Position 64 (Tyr-64) interacts with L-glutamine. Asp-81 provides a ligand contact to ATP. Positions 81 and 151 each coordinate Mg(2+). Residues 158–160 (DIE), 198–203 (KTKPTQ), and Lys-234 each bind CTP. UTP is bound by residues 198 to 203 (KTKPTQ) and Lys-234. Val-252 lines the ATP pocket. Positions 302-549 (KIAIAGKYVK…VEAALAYQER (248 aa)) constitute a Glutamine amidotransferase type-1 domain. Gly-364 is an L-glutamine binding site. The Nucleophile; for glutamine hydrolysis role is filled by Cys-391. L-glutamine-binding positions include 392-395 (LGLQ), Glu-415, and Arg-472. Catalysis depends on residues His-522 and Glu-524.

It belongs to the CTP synthase family. Homotetramer in the presence of UTP and ATP. Is in a protein concentration-dependent equilibrium between monomer, dimer, and tetramer in the absence of UTP and ATP.

It catalyses the reaction UTP + L-glutamine + ATP + H2O = CTP + L-glutamate + ADP + phosphate + 2 H(+). The catalysed reaction is L-glutamine + H2O = L-glutamate + NH4(+). It carries out the reaction UTP + NH4(+) + ATP = CTP + ADP + phosphate + 2 H(+). Its pathway is pyrimidine metabolism; CTP biosynthesis via de novo pathway; CTP from UDP: step 2/2. With respect to regulation, allosterically activated by GTP, when glutamine is the substrate. GTP has no effect on the reaction when ammonia is the substrate. The allosteric effector GTP functions by stabilizing the protein conformation that binds the tetrahedral intermediate(s) formed during glutamine hydrolysis. Inhibited by the product CTP, via allosteric rather than competitive inhibition. Functionally, catalyzes the ATP-dependent amination of UTP to CTP with either L-glutamine or ammonia as the source of nitrogen. Regulates intracellular CTP levels through interactions with the four ribonucleotide triphosphates. The polypeptide is CTP synthase (Thermus thermophilus (strain ATCC 27634 / DSM 579 / HB8)).